Reading from the N-terminus, the 383-residue chain is MSSRPLTIGLVAGETSGDILGAGLIRALKEKVPGARFVGVAGPRMQAEGCEAWYEMEELAVMGIVEVLGRLPRLLKIRRDLTQRFSELQPDVFVGIDAPDFNITLEGNLKQHGINTIHYVSPSVWAWRQKRVFKIGKATNLVLAFLPFEKAFYDRFNVPCRFIGHTMADAMPLHPDKMTARATLGIAPDAHCLALLPGSRGAEVEMLSADFLNTAVLLRQHFPDLEIVVPLVNSKRREQFERIKSSVAPDLRVHLLDGQAREAMIASDAALLASGTAALECMLAKCPMVVGYRMKPFTFWLAQRLVKTPWVSLPNLLAGRELVTELLQTDCTPDKLAAALLPLFADTDKMAELRTTFVDLHQQIRCNADEQAAQAVLELVTPR.

This sequence belongs to the LpxB family.

It catalyses the reaction 2-N,3-O-bis[(3R)-3-hydroxytetradecanoyl]-alpha-D-glucosaminyl 1-phosphate + UDP-2-N,3-O-bis[(3R)-3-hydroxytetradecanoyl]-alpha-D-glucosamine = lipid A disaccharide (E. coli) + UDP + H(+). The catalysed reaction is a lipid X + a UDP-2-N,3-O-bis[(3R)-3-hydroxyacyl]-alpha-D-glucosamine = a lipid A disaccharide + UDP + H(+). It participates in glycolipid biosynthesis; lipid IV(A) biosynthesis; lipid IV(A) from (3R)-3-hydroxytetradecanoyl-[acyl-carrier-protein] and UDP-N-acetyl-alpha-D-glucosamine: step 5/6. Functionally, condensation of UDP-2,3-diacylglucosamine and 2,3-diacylglucosamine-1-phosphate to form lipid A disaccharide, a precursor of lipid A, a phosphorylated glycolipid that anchors the lipopolysaccharide to the outer membrane of the cell. The protein is Lipid-A-disaccharide synthase of Pectobacterium atrosepticum (strain SCRI 1043 / ATCC BAA-672) (Erwinia carotovora subsp. atroseptica).